The sequence spans 130 residues: Putative pre-16S rRNA nuclease (130 aa).

It belongs to the YqgF nuclease family.

Its subcellular location is the cytoplasm. In terms of biological role, could be a nuclease involved in processing of the 5'-end of pre-16S rRNA. The polypeptide is Putative pre-16S rRNA nuclease (Sulfurimonas denitrificans (strain ATCC 33889 / DSM 1251) (Thiomicrospira denitrificans (strain ATCC 33889 / DSM 1251))).